A 351-amino-acid polypeptide reads, in one-letter code: Histidinol-phosphate aminotransferase (351 aa).

Lysine 213 carries the N6-(pyridoxal phosphate)lysine modification.

This sequence belongs to the class-II pyridoxal-phosphate-dependent aminotransferase family. Histidinol-phosphate aminotransferase subfamily. As to quaternary structure, homodimer. The cofactor is pyridoxal 5'-phosphate.

It catalyses the reaction L-histidinol phosphate + 2-oxoglutarate = 3-(imidazol-4-yl)-2-oxopropyl phosphate + L-glutamate. It participates in amino-acid biosynthesis; L-histidine biosynthesis; L-histidine from 5-phospho-alpha-D-ribose 1-diphosphate: step 7/9. The sequence is that of Histidinol-phosphate aminotransferase from Thermoanaerobacter pseudethanolicus (strain ATCC 33223 / 39E) (Clostridium thermohydrosulfuricum).